The following is a 315-amino-acid chain: MKRKLKVAIIGSGNIGTDLMIKILRHGEHIEMGAMVGIDAASDGLQRAARLGVVTTHEGVEGLSRMPVFADIDIVFDATSASAHTRNDAFLRAIKPGIRFVDLTPAAIGPYCIPVVNGERHLDAPNVNMVTCGGQATIPMVAAVSRVARVRYAEIVASISSRSAGPGTRANIDEFTETTSRAIEVVGGAAVGKAIIVLNPAEPPLIMRDTVYTLSEFVDERQIEESVTRMAEAVQTYVPGYRLKQRVQFDRIDADGPIRIPGISDRMVGLKTSIYLEIEGAAHYLPAYAGNLDIMTSAAKVTAEGVANRLLANKK.

Residue 12 to 15 (SGNI) participates in NAD(+) binding. The Acyl-thioester intermediate role is filled by cysteine 132. NAD(+) is bound by residues 163–171 (SAGPGTRAN) and asparagine 291.

This sequence belongs to the acetaldehyde dehydrogenase family.

The catalysed reaction is acetaldehyde + NAD(+) + CoA = acetyl-CoA + NADH + H(+). This chain is Acetaldehyde dehydrogenase 1, found in Paraburkholderia phymatum (strain DSM 17167 / CIP 108236 / LMG 21445 / STM815) (Burkholderia phymatum).